Consider the following 494-residue polypeptide: Guanosine-5'-triphosphate,3'-diphosphate pyrophosphatase (494 aa).

Belongs to the GppA/Ppx family. GppA subfamily.

The catalysed reaction is guanosine 3'-diphosphate 5'-triphosphate + H2O = guanosine 3',5'-bis(diphosphate) + phosphate + H(+). Its pathway is purine metabolism; ppGpp biosynthesis; ppGpp from GTP: step 2/2. Catalyzes the conversion of pppGpp to ppGpp. Guanosine pentaphosphate (pppGpp) is a cytoplasmic signaling molecule which together with ppGpp controls the 'stringent response', an adaptive process that allows bacteria to respond to amino acid starvation, resulting in the coordinated regulation of numerous cellular activities. In Escherichia coli O157:H7, this protein is Guanosine-5'-triphosphate,3'-diphosphate pyrophosphatase.